The following is a 954-amino-acid chain: Glycine dehydrogenase (decarboxylating) (954 aa).

Lysine 706 is subject to N6-(pyridoxal phosphate)lysine.

The protein belongs to the GcvP family. As to quaternary structure, the glycine cleavage system is composed of four proteins: P, T, L and H. Requires pyridoxal 5'-phosphate as cofactor.

The catalysed reaction is N(6)-[(R)-lipoyl]-L-lysyl-[glycine-cleavage complex H protein] + glycine + H(+) = N(6)-[(R)-S(8)-aminomethyldihydrolipoyl]-L-lysyl-[glycine-cleavage complex H protein] + CO2. Its function is as follows. The glycine cleavage system catalyzes the degradation of glycine. The P protein binds the alpha-amino group of glycine through its pyridoxal phosphate cofactor; CO(2) is released and the remaining methylamine moiety is then transferred to the lipoamide cofactor of the H protein. This is Glycine dehydrogenase (decarboxylating) from Pseudomonas syringae pv. tomato (strain ATCC BAA-871 / DC3000).